A 458-amino-acid polypeptide reads, in one-letter code: Histidine--tRNA ligase (458 aa).

The protein belongs to the class-II aminoacyl-tRNA synthetase family. As to quaternary structure, homodimer.

It is found in the cytoplasm. It catalyses the reaction tRNA(His) + L-histidine + ATP = L-histidyl-tRNA(His) + AMP + diphosphate + H(+). The chain is Histidine--tRNA ligase from Micrococcus luteus (strain ATCC 4698 / DSM 20030 / JCM 1464 / CCM 169 / CCUG 5858 / IAM 1056 / NBRC 3333 / NCIMB 9278 / NCTC 2665 / VKM Ac-2230) (Micrococcus lysodeikticus).